Here is a 534-residue protein sequence, read N- to C-terminus: Protein tweety homolog 2 (534 aa).

Over 1–44 the chain is Extracellular; sequence MAAARVEYIAPWWVYWLHNFPHVDLSLRQKSPDFNPKDPGYQQT. Residues 45-65 traverse the membrane as a helical segment; it reads LLFVALIVALCAAVNLLFVSV. Over 66-87 the chain is Cytoplasmic; the sequence is YLICLCCCKKEDETETKKTSSC. A helical membrane pass occupies residues 88–108; it reads CVTWTAAVSGLLCCAAVGIGF. Residues 109 to 213 are Extracellular-facing; the sequence is YGNSETNDGV…QTSTIEYYRW (105 aa). Ca(2+)-binding residues include Glu-113 and Asp-116. Asn-129 carries N-linked (GlcNAc...) asparagine glycosylation. The RGD signature appears at 164–166; sequence RGD. A glycan (N-linked (GlcNAc...) asparagine) is linked at Asn-197. The chain crosses the membrane as a helical span at residues 214–234; that stretch reads LSYLLLFISYVVICLVTCVGL. Residues 235–240 lie on the Cytoplasmic side of the membrane; the sequence is AKKSKC. The chain crosses the membrane as a helical span at residues 241–261; that stretch reads LLLIMLCFGLIALMLSWTSLA. The Extracellular segment spans residues 262–388; it reads LETSSAMGTS…IGICYDGVEG (127 aa). 2 cysteine pairs are disulfide-bonded: Cys-274-Cys-382 and Cys-300-Cys-367. Asn-283 and Asn-352 each carry an N-linked (GlcNAc...) asparagine glycan. Residues 389 to 409 traverse the membrane as a helical segment; sequence MLYLGLFSLLAALAFTAMVCA. Residues 410 to 534 lie on the Cytoplasmic side of the membrane; sequence MPQAWKHLEA…SSIYSNVFPA (125 aa).

This sequence belongs to the tweety family. As to quaternary structure, forms cis-homodimers in the presence of Ca(+2) and forms monomers and trans-dimers in the absence of Ca(2+).

Its subcellular location is the cell membrane. It catalyses the reaction chloride(in) = chloride(out). The catalysed reaction is L-glutamate(out) = L-glutamate(in). In terms of biological role, may act as a calcium-independent, swelling-dependent volume-regulated anion channel (VRAC-swell) which plays a pivotal role in the process of regulatory volume decrease (RVD) in the brain through the efflux of anions like chloride and organic osmolytes like glutamate. Probable large-conductance Ca(2+)-activated chloride channel. This is Protein tweety homolog 2 (ttyh2) from Xenopus tropicalis (Western clawed frog).